The primary structure comprises 148 residues: UPF0178 protein Mlg_1612 (148 aa).

The protein belongs to the UPF0178 family.

This Alkalilimnicola ehrlichii (strain ATCC BAA-1101 / DSM 17681 / MLHE-1) protein is UPF0178 protein Mlg_1612.